The sequence spans 242 residues: Small ribosomal subunit protein uS2 (242 aa).

Belongs to the universal ribosomal protein uS2 family.

The protein is Small ribosomal subunit protein uS2 of Shewanella oneidensis (strain ATCC 700550 / JCM 31522 / CIP 106686 / LMG 19005 / NCIMB 14063 / MR-1).